Reading from the N-terminus, the 702-residue chain is Soluble guanylate cyclase gcy-31 (702 aa).

Histidine 104 contacts heme. Residues 368–406 (TQQSAELKLLLHQEAQKSRNMRENMNRLKKERRRTDKLL) adopt a coiled-coil conformation. The Guanylate cyclase domain occupies 435–564 (TILFTDIVEF…ETVYVANKME (130 aa)). Mg(2+) is bound by residues aspartate 440 and aspartate 484. The interval 614–702 (RHGPHRVPSP…QDLTPRKSIT (89 aa)) is disordered. The segment covering 633 to 643 (SQTEDDDDDEL) has biased composition (acidic residues). Polar residues predominate over residues 683–695 (RNSNKTPRQSQDL).

The protein belongs to the adenylyl cyclase class-4/guanylyl cyclase family. Heterodimer; with other soluble guanylate cyclases. Requires heme as cofactor. In terms of tissue distribution, expressed in a pair of bilaterally symmetric neurons in the head.

Its subcellular location is the cytoplasm. The catalysed reaction is GTP = 3',5'-cyclic GMP + diphosphate. May be regulated by molecular oxygen. Probably not activated by nitric oxide (NO). Functionally, synthesizes cyclic GMP (cGMP) from GTP. May play a role in embryogenesis. The sequence is that of Soluble guanylate cyclase gcy-31 (gcy-31) from Caenorhabditis elegans.